A 166-amino-acid chain; its full sequence is Crossover junction endodeoxyribonuclease RuvC (166 aa).

Residues aspartate 11, glutamate 70, and aspartate 142 contribute to the active site. The Mg(2+) site is built by aspartate 11, glutamate 70, and aspartate 142.

The protein belongs to the RuvC family. Homodimer which binds Holliday junction (HJ) DNA. The HJ becomes 2-fold symmetrical on binding to RuvC with unstacked arms; it has a different conformation from HJ DNA in complex with RuvA. In the full resolvosome a probable DNA-RuvA(4)-RuvB(12)-RuvC(2) complex forms which resolves the HJ. Requires Mg(2+) as cofactor.

The protein resides in the cytoplasm. It catalyses the reaction Endonucleolytic cleavage at a junction such as a reciprocal single-stranded crossover between two homologous DNA duplexes (Holliday junction).. In terms of biological role, the RuvA-RuvB-RuvC complex processes Holliday junction (HJ) DNA during genetic recombination and DNA repair. Endonuclease that resolves HJ intermediates. Cleaves cruciform DNA by making single-stranded nicks across the HJ at symmetrical positions within the homologous arms, yielding a 5'-phosphate and a 3'-hydroxyl group; requires a central core of homology in the junction. The consensus cleavage sequence is 5'-(A/T)TT(C/G)-3'. Cleavage occurs on the 3'-side of the TT dinucleotide at the point of strand exchange. HJ branch migration catalyzed by RuvA-RuvB allows RuvC to scan DNA until it finds its consensus sequence, where it cleaves and resolves the cruciform DNA. This chain is Crossover junction endodeoxyribonuclease RuvC, found in Nitratidesulfovibrio vulgaris (strain ATCC 29579 / DSM 644 / CCUG 34227 / NCIMB 8303 / VKM B-1760 / Hildenborough) (Desulfovibrio vulgaris).